We begin with the raw amino-acid sequence, 450 residues long: 3-phosphoshikimate 1-carboxyvinyltransferase (450 aa).

The 3-phosphoshikimate site is built by lysine 28, serine 29, and arginine 33. Lysine 28 contacts phosphoenolpyruvate. 2 residues coordinate phosphoenolpyruvate: glycine 100 and arginine 128. Residues serine 173, glutamine 175, aspartate 326, and lysine 353 each coordinate 3-phosphoshikimate. A phosphoenolpyruvate-binding site is contributed by glutamine 175. Aspartate 326 acts as the Proton acceptor in catalysis. Phosphoenolpyruvate is bound by residues arginine 357 and arginine 402.

Belongs to the EPSP synthase family. As to quaternary structure, monomer.

It is found in the cytoplasm. The enzyme catalyses 3-phosphoshikimate + phosphoenolpyruvate = 5-O-(1-carboxyvinyl)-3-phosphoshikimate + phosphate. It participates in metabolic intermediate biosynthesis; chorismate biosynthesis; chorismate from D-erythrose 4-phosphate and phosphoenolpyruvate: step 6/7. Catalyzes the transfer of the enolpyruvyl moiety of phosphoenolpyruvate (PEP) to the 5-hydroxyl of shikimate-3-phosphate (S3P) to produce enolpyruvyl shikimate-3-phosphate and inorganic phosphate. This Brucella abortus (strain S19) protein is 3-phosphoshikimate 1-carboxyvinyltransferase.